The sequence spans 89 residues: Small ribosomal subunit protein uS15 (89 aa).

A disordered region spans residues 1-22 (MPLSKEQKQEVMEKYKLHEHDT).

This sequence belongs to the universal ribosomal protein uS15 family. Part of the 30S ribosomal subunit. Forms a bridge to the 50S subunit in the 70S ribosome, contacting the 23S rRNA.

Its function is as follows. One of the primary rRNA binding proteins, it binds directly to 16S rRNA where it helps nucleate assembly of the platform of the 30S subunit by binding and bridging several RNA helices of the 16S rRNA. Forms an intersubunit bridge (bridge B4) with the 23S rRNA of the 50S subunit in the ribosome. The protein is Small ribosomal subunit protein uS15 of Natranaerobius thermophilus (strain ATCC BAA-1301 / DSM 18059 / JW/NM-WN-LF).